The primary structure comprises 157 residues: Endoribonuclease YbeY (157 aa).

Residues His-121, His-125, and His-131 each coordinate Zn(2+).

Belongs to the endoribonuclease YbeY family. Zn(2+) serves as cofactor.

It localises to the cytoplasm. Its function is as follows. Single strand-specific metallo-endoribonuclease involved in late-stage 70S ribosome quality control and in maturation of the 3' terminus of the 16S rRNA. The chain is Endoribonuclease YbeY from Salinispora tropica (strain ATCC BAA-916 / DSM 44818 / JCM 13857 / NBRC 105044 / CNB-440).